We begin with the raw amino-acid sequence, 557 residues long: Trigger factor (557 aa).

One can recognise a PPIase FKBP-type domain in the interval 169 to 255; that stretch reads GDVVVIDFQA…LKEIKTKELP (87 aa). The interval 438 to 557 is disordered; that stretch reads WVDSEGNPTE…KAGKKSKKDK (120 aa). Residues 455–466 are compositionally biased toward basic and acidic residues; the sequence is SEGEDRQERSES.

This sequence belongs to the FKBP-type PPIase family. Tig subfamily.

The protein resides in the cytoplasm. The enzyme catalyses [protein]-peptidylproline (omega=180) = [protein]-peptidylproline (omega=0). In terms of biological role, involved in protein export. Acts as a chaperone by maintaining the newly synthesized protein in an open conformation. Functions as a peptidyl-prolyl cis-trans isomerase. In Synechococcus sp. (strain JA-3-3Ab) (Cyanobacteria bacterium Yellowstone A-Prime), this protein is Trigger factor.